Consider the following 133-residue polypeptide: Small ribosomal subunit protein uS8 (133 aa).

It belongs to the universal ribosomal protein uS8 family. Part of the 30S ribosomal subunit. Contacts proteins S5 and S12.

Its function is as follows. One of the primary rRNA binding proteins, it binds directly to 16S rRNA central domain where it helps coordinate assembly of the platform of the 30S subunit. The chain is Small ribosomal subunit protein uS8 from Amoebophilus asiaticus (strain 5a2).